Here is a 466-residue protein sequence, read N- to C-terminus: Alpha-1A adrenergic receptor (466 aa).

Over Met1 to Lys25 the chain is Extracellular. N-linked (GlcNAc...) asparagine glycans are attached at residues Asn7, Asn13, and Asn22. The chain crosses the membrane as a helical span at residues Ala26–Val51. The Cytoplasmic segment spans residues Ala52–Tyr63. The chain crosses the membrane as a helical span at residues Tyr64–Leu89. Over Gly90–Cys99 the chain is Extracellular. Residues Asn100 to Ile122 form a helical membrane-spanning segment. Topologically, residues Asp123–Gly143 are cytoplasmic. A helical transmembrane segment spans residues Leu144 to Pro168. The Extracellular segment spans residues Ala169–Glu181. A helical transmembrane segment spans residues Pro182–Cys205. Residues Arg206 to Lys272 are Cytoplasmic-facing. The helical transmembrane segment at Thr273–Phe297 threads the bilayer. Over Phe298 to Pro304 the chain is Extracellular. Residues Glu305–Ser329 traverse the membrane as a helical segment. Topologically, residues Ser330–Val466 are cytoplasmic. The Nuclear localization signal signature appears at Lys334–Lys349. Residue Cys345 is the site of S-palmitoyl cysteine attachment.

It belongs to the G-protein coupled receptor 1 family. Adrenergic receptor subfamily. ADRA1A sub-subfamily. In terms of assembly, homo- and heterooligomer. Heterooligomerizes with ADRA1B homooligomers in cardiac myocytes. Interacts with CAVIN4. As to expression, abundant in liver, vas deferens, brain, and aorta, but not in heart.

The protein localises to the nucleus membrane. The protein resides in the cell membrane. It localises to the cytoplasm. Its subcellular location is the membrane. It is found in the caveola. This alpha-adrenergic receptor mediates its action by association with G proteins that activate a phosphatidylinositol-calcium second messenger system. Its effect is mediated by G(q) and G(11) proteins. Nuclear ADRA1A-ADRA1B heterooligomers regulate phenylephrine (PE)-stimulated ERK signaling in cardiac myocytes. The polypeptide is Alpha-1A adrenergic receptor (ADRA1A) (Oryctolagus cuniculus (Rabbit)).